Here is a 157-residue protein sequence, read N- to C-terminus: Lipoprotein signal peptidase (157 aa).

The next 3 membrane-spanning stretches (helical) occupy residues 10 to 30, 58 to 78, and 84 to 104; these read LVFM…KYAI, FLEG…FIFL, and LFKN…SNVL. Catalysis depends on residues aspartate 114 and aspartate 131. The chain crosses the membrane as a helical span at residues 122–142; it reads FDFAIFNFADVMIDVGVGVLL.

This sequence belongs to the peptidase A8 family.

Its subcellular location is the cell inner membrane. The catalysed reaction is Release of signal peptides from bacterial membrane prolipoproteins. Hydrolyzes -Xaa-Yaa-Zaa-|-(S,diacylglyceryl)Cys-, in which Xaa is hydrophobic (preferably Leu), and Yaa (Ala or Ser) and Zaa (Gly or Ala) have small, neutral side chains.. The protein operates within protein modification; lipoprotein biosynthesis (signal peptide cleavage). This protein specifically catalyzes the removal of signal peptides from prolipoproteins. This Helicobacter pylori (strain ATCC 700392 / 26695) (Campylobacter pylori) protein is Lipoprotein signal peptidase.